Consider the following 281-residue polypeptide: UPF0273 protein PAE3143 (281 aa).

In terms of domain architecture, KaiC spans 4 to 248 (PRVRSYVPGL…YIKITGSSVR (245 aa)). Residue 31 to 38 (GGPGTGKS) coordinates ATP.

Belongs to the UPF0273 family.

This chain is UPF0273 protein PAE3143, found in Pyrobaculum aerophilum (strain ATCC 51768 / DSM 7523 / JCM 9630 / CIP 104966 / NBRC 100827 / IM2).